The chain runs to 451 residues: tRNA modification GTPase MnmE (451 aa).

Residues Arg23, Glu80, and Lys119 each coordinate (6S)-5-formyl-5,6,7,8-tetrahydrofolate. Positions Gly215 to Gly372 constitute a TrmE-type G domain. Residue Asn225 participates in K(+) binding. GTP contacts are provided by residues Asn225–Ser230, Thr244–Thr250, and Asp269–Gly272. Ser229 contributes to the Mg(2+) binding site. K(+) contacts are provided by Thr244, Ile246, and Thr249. Thr250 is a binding site for Mg(2+). Lys451 contributes to the (6S)-5-formyl-5,6,7,8-tetrahydrofolate binding site.

Belongs to the TRAFAC class TrmE-Era-EngA-EngB-Septin-like GTPase superfamily. TrmE GTPase family. As to quaternary structure, homodimer. Heterotetramer of two MnmE and two MnmG subunits. It depends on K(+) as a cofactor.

The protein resides in the cytoplasm. Exhibits a very high intrinsic GTPase hydrolysis rate. Involved in the addition of a carboxymethylaminomethyl (cmnm) group at the wobble position (U34) of certain tRNAs, forming tRNA-cmnm(5)s(2)U34. This chain is tRNA modification GTPase MnmE, found in Nitrosomonas eutropha (strain DSM 101675 / C91 / Nm57).